Reading from the N-terminus, the 120-residue chain is UPF0102 protein PTH_1707 (120 aa).

This sequence belongs to the UPF0102 family.

This Pelotomaculum thermopropionicum (strain DSM 13744 / JCM 10971 / SI) protein is UPF0102 protein PTH_1707.